Reading from the N-terminus, the 153-residue chain is Endoribonuclease YbeY (153 aa).

Residues histidine 112, histidine 116, and histidine 122 each coordinate Zn(2+).

It belongs to the endoribonuclease YbeY family. It depends on Zn(2+) as a cofactor.

The protein resides in the cytoplasm. Functionally, single strand-specific metallo-endoribonuclease involved in late-stage 70S ribosome quality control and in maturation of the 3' terminus of the 16S rRNA. The polypeptide is Endoribonuclease YbeY (Persephonella marina (strain DSM 14350 / EX-H1)).